The primary structure comprises 300 residues: Cytochrome b (300 aa).

Transmembrane regions (helical) follow at residues 28–48 (YGFL…LLAL), 72–94 (WCFR…LHIL), 107–127 (SWIS…YGYV), 168–187 (FFVF…FGIL), 223–243 (IPNK…LFLL), and 279–299 (IGCQ…YIIL). Heme b contacts are provided by His-78 and His-92.

The protein belongs to the cytochrome b family. In terms of assembly, the main subunits of complex b-c1 are: cytochrome b, cytochrome c1 and the Rieske protein. Requires heme b as cofactor.

Its subcellular location is the mitochondrion inner membrane. In terms of biological role, component of the ubiquinol-cytochrome c reductase complex (complex III or cytochrome b-c1 complex) that is part of the mitochondrial respiratory chain. The b-c1 complex mediates electron transfer from ubiquinol to cytochrome c. Contributes to the generation of a proton gradient across the mitochondrial membrane that is then used for ATP synthesis. This Plasmodium gallinaceum protein is Cytochrome b (MT-CYB).